The sequence spans 140 residues: uncharacterized protein (140 aa).

Residues R3–P131 enclose the VOC domain. A divalent metal cation-binding residues include H6, E53, H77, and E127.

The protein belongs to the methylmalonyl-CoA epimerase family.

This is an uncharacterized protein from Bacillus subtilis (strain 168).